The chain runs to 221 residues: 6-phosphogluconate phosphatase (221 aa).

The active-site Nucleophile is the Asp10. Residues Asp10, Asp12, and Asp167 each coordinate Mg(2+). 10–12 (DCD) is a substrate binding site.

This sequence belongs to the HAD-like hydrolase superfamily. CbbY/CbbZ/Gph/YieH family. Mg(2+) serves as cofactor. Requires Mn(2+) as cofactor. Co(2+) is required as a cofactor. It depends on Zn(2+) as a cofactor.

Catalyzes strongly the dephosphorylation of 6-phosphogluconate (6P-Glu) and slightly the dephosphorylation of dihydroxyacetone phosphate (DHAP) and phosphoenolpyruvate (PEP). Also hydrolyzes both purines (GMP and IMP) and pyrimidines as secondary substrates. This is 6-phosphogluconate phosphatase (yieH) from Escherichia coli (strain K12).